The chain runs to 286 residues: 4-hydroxybenzoate octaprenyltransferase (286 aa).

The next 7 membrane-spanning stretches (helical) occupy residues 21–40, 95–115, 142–162, 167–187, 210–230, 235–255, and 266–286; these read GTLL…AGGM, ILFV…NGLV, FLGI…TGEV, WWLF…YAMV, QIIG…GWSA, LYGL…MLIF, and FLNN…DYLI.

It belongs to the UbiA prenyltransferase family. Mg(2+) is required as a cofactor.

It localises to the cell inner membrane. It catalyses the reaction all-trans-octaprenyl diphosphate + 4-hydroxybenzoate = 4-hydroxy-3-(all-trans-octaprenyl)benzoate + diphosphate. It participates in cofactor biosynthesis; ubiquinone biosynthesis. Its function is as follows. Catalyzes the prenylation of para-hydroxybenzoate (PHB) with an all-trans polyprenyl group. Mediates the second step in the final reaction sequence of ubiquinone-8 (UQ-8) biosynthesis, which is the condensation of the polyisoprenoid side chain with PHB, generating the first membrane-bound Q intermediate 3-octaprenyl-4-hydroxybenzoate. This chain is 4-hydroxybenzoate octaprenyltransferase, found in Shewanella baltica (strain OS185).